Consider the following 163-residue polypeptide: 16S rRNA aminocarboxypropyltransferase (163 aa).

Residues T18, I66, L87, and S106 each coordinate S-adenosyl-L-methionine.

This sequence belongs to the TDD superfamily. TSR3 family.

It is found in the cytoplasm. It carries out the reaction an N(1)-methylpseudouridine in rRNA + S-adenosyl-L-methionine = N(1)-methyl-N(3)-[(3S)-3-amino-3-carboxypropyl]pseudouridine in rRNA + S-methyl-5'-thioadenosine + H(+). Functionally, aminocarboxypropyltransferase that catalyzes the aminocarboxypropyl transfer on pseudouridine corresponding to position 914 in M.jannaschii 16S rRNA. It constitutes the last step in biosynthesis of the hypermodified N1-methyl-N3-(3-amino-3-carboxypropyl) pseudouridine (m1acp3-Psi). This chain is 16S rRNA aminocarboxypropyltransferase, found in Thermoplasma acidophilum (strain ATCC 25905 / DSM 1728 / JCM 9062 / NBRC 15155 / AMRC-C165).